The following is a 508-amino-acid chain: Asparagine--tRNA ligase (508 aa).

This sequence belongs to the class-II aminoacyl-tRNA synthetase family. As to quaternary structure, homodimer.

Its subcellular location is the cytoplasm. It carries out the reaction tRNA(Asn) + L-asparagine + ATP = L-asparaginyl-tRNA(Asn) + AMP + diphosphate + H(+). This Streptococcus suis (strain 05ZYH33) protein is Asparagine--tRNA ligase.